The primary structure comprises 106 residues: Large ribosomal subunit protein eL42 (106 aa).

Belongs to the eukaryotic ribosomal protein eL42 family.

This Cyberlindnera jadinii (Torula yeast) protein is Large ribosomal subunit protein eL42 (RPL44).